A 493-amino-acid chain; its full sequence is Probable cytosol aminopeptidase (493 aa).

The Mn(2+) site is built by Lys-265 and Asp-270. The active site involves Lys-277. Mn(2+) is bound by residues Asp-288, Asp-347, and Glu-349. Residue Arg-351 is part of the active site.

The protein belongs to the peptidase M17 family. It depends on Mn(2+) as a cofactor.

The protein localises to the cytoplasm. It carries out the reaction Release of an N-terminal amino acid, Xaa-|-Yaa-, in which Xaa is preferably Leu, but may be other amino acids including Pro although not Arg or Lys, and Yaa may be Pro. Amino acid amides and methyl esters are also readily hydrolyzed, but rates on arylamides are exceedingly low.. The enzyme catalyses Release of an N-terminal amino acid, preferentially leucine, but not glutamic or aspartic acids.. Functionally, presumably involved in the processing and regular turnover of intracellular proteins. Catalyzes the removal of unsubstituted N-terminal amino acids from various peptides. The sequence is that of Probable cytosol aminopeptidase from Hydrogenovibrio crunogenus (strain DSM 25203 / XCL-2) (Thiomicrospira crunogena).